Consider the following 806-residue polypeptide: Ribonucleoside-diphosphate reductase large subunit (806 aa).

An ATP-cone domain is found at 1–91 (MYVLNRKGEE…TDNLHKNTSD (91 aa)). ATP is bound by residues 5–6 (NR), 11–17 (EDISFDQ), threonine 52, and aspartate 56. Position 215 (serine 215) interacts with GDP. Cysteine 216 and cysteine 442 form a disulfide bridge. DTTP is bound by residues 224–226 (DSI), lysine 241, arginine 254, and 261–262 (RG). Asparagine 425 contacts GDP. Asparagine 425 serves as the catalytic Proton acceptor. The active-site Cysteine radical intermediate is cysteine 427. Residues glutamate 429 and 604 to 607 (TAST) each bind GDP. Glutamate 429 acts as the Proton acceptor in catalysis.

Belongs to the ribonucleoside diphosphate reductase large chain family. In terms of assembly, heterodimer of a large and a small subunit.

It carries out the reaction a 2'-deoxyribonucleoside 5'-diphosphate + [thioredoxin]-disulfide + H2O = a ribonucleoside 5'-diphosphate + [thioredoxin]-dithiol. Its activity is regulated as follows. Under complex allosteric control mediated by deoxynucleoside triphosphates and ATP binding to separate specificity and activation sites on the large subunit. The type of nucleotide bound at the specificity site determines substrate preference. It seems probable that ATP makes the enzyme reduce CDP and UDP, dGTP favors ADP reduction and dTTP favors GDP reduction. Stimulated by ATP and inhibited by dATP binding to the activity site. Its function is as follows. Provides the precursors necessary for DNA synthesis. Catalyzes the biosynthesis of deoxyribonucleotides from the corresponding ribonucleotides. This is Ribonucleoside-diphosphate reductase large subunit (RNR1) from Plasmodium falciparum (isolate Dd2).